A 418-amino-acid polypeptide reads, in one-letter code: Cobalt-zinc-cadmium resistance protein CzcC (418 aa).

The N-terminal stretch at 1-22 (MRRLFLPLGLAVAFLSPNFAVA) is a signal peptide.

The protein belongs to the outer membrane factor (OMF) (TC 1.B.17) family.

The protein localises to the cell outer membrane. CzcC protein appears to modify the specificity of the system, perhaps by acting on the CzcB protein. When the CzcC protein is added to CzcA and CzcB, the efflux system gains specificity for cadmium and cobalt. In Cupriavidus metallidurans (strain ATCC 43123 / DSM 2839 / NBRC 102507 / CH34) (Ralstonia metallidurans), this protein is Cobalt-zinc-cadmium resistance protein CzcC (czcC).